A 205-amino-acid chain; its full sequence is Holliday junction branch migration complex subunit RuvA (205 aa).

Residues 1–64 (MIGKLKGLID…EDQIKLFGFR (64 aa)) are domain I. Residues 65-143 (SDLEREWFRL…AFASVDPAVV (79 aa)) form a domain II region. The interval 144–153 (ALSGALDERS) is flexible linker. The interval 153–205 (SAPRPVTDAISALVNLGYGQPQAAAAIASASRSAGEGAETAQLIKLGLKELSK) is domain III.

It belongs to the RuvA family. In terms of assembly, homotetramer. Forms an RuvA(8)-RuvB(12)-Holliday junction (HJ) complex. HJ DNA is sandwiched between 2 RuvA tetramers; dsDNA enters through RuvA and exits via RuvB. An RuvB hexamer assembles on each DNA strand where it exits the tetramer. Each RuvB hexamer is contacted by two RuvA subunits (via domain III) on 2 adjacent RuvB subunits; this complex drives branch migration. In the full resolvosome a probable DNA-RuvA(4)-RuvB(12)-RuvC(2) complex forms which resolves the HJ.

The protein localises to the cytoplasm. In terms of biological role, the RuvA-RuvB-RuvC complex processes Holliday junction (HJ) DNA during genetic recombination and DNA repair, while the RuvA-RuvB complex plays an important role in the rescue of blocked DNA replication forks via replication fork reversal (RFR). RuvA specifically binds to HJ cruciform DNA, conferring on it an open structure. The RuvB hexamer acts as an ATP-dependent pump, pulling dsDNA into and through the RuvAB complex. HJ branch migration allows RuvC to scan DNA until it finds its consensus sequence, where it cleaves and resolves the cruciform DNA. The sequence is that of Holliday junction branch migration complex subunit RuvA from Rhodopseudomonas palustris (strain BisB18).